The sequence spans 97 residues: Aspartyl/glutamyl-tRNA(Asn/Gln) amidotransferase subunit C (97 aa).

This sequence belongs to the GatC family. Heterotrimer of A, B and C subunits.

It carries out the reaction L-glutamyl-tRNA(Gln) + L-glutamine + ATP + H2O = L-glutaminyl-tRNA(Gln) + L-glutamate + ADP + phosphate + H(+). The catalysed reaction is L-aspartyl-tRNA(Asn) + L-glutamine + ATP + H2O = L-asparaginyl-tRNA(Asn) + L-glutamate + ADP + phosphate + 2 H(+). In terms of biological role, allows the formation of correctly charged Asn-tRNA(Asn) or Gln-tRNA(Gln) through the transamidation of misacylated Asp-tRNA(Asn) or Glu-tRNA(Gln) in organisms which lack either or both of asparaginyl-tRNA or glutaminyl-tRNA synthetases. The reaction takes place in the presence of glutamine and ATP through an activated phospho-Asp-tRNA(Asn) or phospho-Glu-tRNA(Gln). The protein is Aspartyl/glutamyl-tRNA(Asn/Gln) amidotransferase subunit C of Synechococcus sp. (strain JA-2-3B'a(2-13)) (Cyanobacteria bacterium Yellowstone B-Prime).